The chain runs to 166 residues: Keratin, type II cytoskeletal 68 kDa, component IB (166 aa).

Residues 1-41 form the IF rod domain; it reads EAKDDLARLLRDYQDAMNVKLALDVEIATYRKLLEGEECRM. The segment at 1–41 is coil 2B; it reads EAKDDLARLLRDYQDAMNVKLALDVEIATYRKLLEGEECRM. Residues 42-166 are tail; the sequence is SGECPSAVSI…FSQSSQRTSR (125 aa). Over residues 122–146 the composition is skewed to gly residues; it reads GFGGGSSGFGSGSGGRSGVSGGGLS. The tract at residues 122 to 166 is disordered; it reads GFGGGSSGFGSGSGGRSGVSGGGLSSGSSRGGSVRFSQSSQRTSR. Over residues 147-166 the composition is skewed to low complexity; it reads SGSSRGGSVRFSQSSQRTSR.

This sequence belongs to the intermediate filament family. In terms of assembly, heterotetramer of two type I and two type II keratins.

The sequence is that of Keratin, type II cytoskeletal 68 kDa, component IB from Bos taurus (Bovine).